Consider the following 1281-residue polypeptide: Tubulin polyglutamylase TTLL5 (1281 aa).

Positions 62-407 (RYHLSYKIVR…VCQDPAQRAS (346 aa)) constitute a TTL domain. ATP-binding positions include lysine 180, 186–187 (RG), 208–211 (SRYI), and 221–223 (KFD). Arginine 186 is a binding site for a protein. L-glutamate is bound at residue arginine 247. ATP is bound at residue 268-269 (TN). L-glutamate contacts are provided by tyrosine 270, serine 271, and lysine 293. 3 residues coordinate Mg(2+): aspartate 353, glutamate 366, and asparagine 368. The c-MTBD region stretch occupies residues 378 to 488 (PLDLKIKASM…RGGFIRIFPT (111 aa)). Lysine 384 contacts L-glutamate. Disordered stretches follow at residues 577–614 (MNVK…LREN), 1072–1114 (SASA…LQTG), and 1199–1281 (SSAT…HTKI). Acidic residues predominate over residues 584–604 (ESEEEEEVALDNEDEEQEASQ). Composition is skewed to polar residues over residues 1086 to 1113 (SGPT…SLQT), 1199 to 1212 (SSAT…TTLP), 1240 to 1263 (ATSQ…SSLN), and 1270 to 1281 (ITSSTDPAHTKI).

The protein belongs to the tubulin--tyrosine ligase family. Interacts with the transcriptional coactivators NCOA1/SRC-1 and NCOA2/TIF2. Mg(2+) serves as cofactor. In terms of tissue distribution, expressed in the retina, found in the rod and cone photoreceptors (at protein level). Widely expressed with highest levels in heart and skeletal muscle and low levels in other tissues.

It localises to the cell projection. The protein resides in the cilium. It is found in the cytoplasm. The protein localises to the cytoskeleton. Its subcellular location is the cilium basal body. It localises to the nucleus. The enzyme catalyses L-glutamyl-[protein] + L-glutamate + ATP = gamma-L-glutamyl-L-glutamyl-[protein] + ADP + phosphate + H(+). It catalyses the reaction (L-glutamyl)(n)-gamma-L-glutamyl-L-glutamyl-[protein] + L-glutamate + ATP = (L-glutamyl)(n+1)-gamma-L-glutamyl-L-glutamyl-[protein] + ADP + phosphate + H(+). Polyglutamylase which modifies tubulin, generating polyglutamate side chains on the gamma-carboxyl group of specific glutamate residues within the C-terminal tail of tubulin. Preferentially mediates ATP-dependent initiation step of the polyglutamylation reaction over the elongation step. Preferentially modifies the alpha-tubulin tail over a beta-tail. Required for CCSAP localization to both polyglutamylated spindle and cilia microtubules. Increases the effects of transcriptional coactivator NCOA2/TIF2 in glucocorticoid receptor-mediated repression and induction and in androgen receptor-mediated induction. The polypeptide is Tubulin polyglutamylase TTLL5 (Homo sapiens (Human)).